Here is a 1342-residue protein sequence, read N- to C-terminus: DNA-directed RNA polymerase subunit beta (1342 aa).

The protein belongs to the RNA polymerase beta chain family. As to quaternary structure, the RNAP catalytic core consists of 2 alpha, 1 beta, 1 beta' and 1 omega subunit. When a sigma factor is associated with the core the holoenzyme is formed, which can initiate transcription.

The catalysed reaction is RNA(n) + a ribonucleoside 5'-triphosphate = RNA(n+1) + diphosphate. Functionally, DNA-dependent RNA polymerase catalyzes the transcription of DNA into RNA using the four ribonucleoside triphosphates as substrates. In Aeromonas hydrophila subsp. hydrophila (strain ATCC 7966 / DSM 30187 / BCRC 13018 / CCUG 14551 / JCM 1027 / KCTC 2358 / NCIMB 9240 / NCTC 8049), this protein is DNA-directed RNA polymerase subunit beta.